Reading from the N-terminus, the 201-residue chain is Large ribosomal subunit protein uL4 (201 aa).

The interval 44–68 (RAQKSRAEVSGSGRKPWRQKGTGRA) is disordered.

The protein belongs to the universal ribosomal protein uL4 family. As to quaternary structure, part of the 50S ribosomal subunit.

One of the primary rRNA binding proteins, this protein initially binds near the 5'-end of the 23S rRNA. It is important during the early stages of 50S assembly. It makes multiple contacts with different domains of the 23S rRNA in the assembled 50S subunit and ribosome. Its function is as follows. Forms part of the polypeptide exit tunnel. The protein is Large ribosomal subunit protein uL4 of Buchnera aphidicola subsp. Acyrthosiphon pisum (strain 5A).